A 69-amino-acid chain; its full sequence is Disintegrin EMF10A (69 aa).

Positions M1 to E66 constitute a Disintegrin domain. Disulfide bonds link C7–C30, C21–C27, C26–C51, and C39–C58. The short motif at R43–D45 is the Cell attachment site element.

This sequence belongs to the disintegrin family. Dimeric disintegrin subfamily. In terms of assembly, heterodimer with EMF10B; disulfide-linked. Expressed by the venom gland.

The protein localises to the secreted. Its function is as follows. Extremely potent and selective inhibitor of integrin alpha-5/beta-1 (ITGA5/ITGB1). Partially inhibits adhesion of cells expressing alpha-IIb/beta-3 (ITGA2B/ITGB3), alpha-V/beta-3 (ITGAV/ITGB3), and alpha-4/beta-1 (ITGA4/ITGB1) to appropriate ligands only at concentration higher than 500 nM. Weakly inhibits ADP-induced platelet aggregation. In Eristicophis macmahoni (Leaf-nosed viper), this protein is Disintegrin EMF10A.